The following is a 520-amino-acid chain: Beta-2-syntrophin (520 aa).

The disordered stretch occupies residues 45 to 95 (EPPAAAFNGLPNGGGGESLPGSPNRGLGPPSPPAPPRGPAGEASASPPVRR). Low complexity predominate over residues 63–72 (LPGSPNRGLG). Pro residues predominate over residues 73–82 (PPSPPAPPRG). Phosphoserine occurs at positions 75, 90, 109, 191, 202, 213, 373, and 375. Residues 83–93 (PAGEASASPPV) are compositionally biased toward low complexity. One can recognise a PDZ domain in the interval 95 to 178 (RVRVVKQEAG…EVLLEVKFIR (84 aa)). PH domains are found at residues 143–280 (ILSV…TNIM) and 305–417 (EVKH…QGCH). A disordered region spans residues 195–220 (WEGASPQSPSFSGSEDSGSPKHQNTT). Residues 197–211 (GASPQSPSFSGSEDS) show a composition bias toward low complexity. An SU domain is found at 464-520 (PFERLKMSADDGIRNLYLDFGGPEGELTMDLHSCPKPIVFVLHTFLSAKVTRMGLLV). Positions 498–520 (PKPIVFVLHTFLSAKVTRMGLLV) are calmodulin-binding.

It belongs to the syntrophin family. In terms of assembly, monomer and homodimer. Interacts with the dystrophin protein DMD and related protein DTNA; and with the other members of the syntrophin family: SNTA1 and SNTB1. Interacts with the neuroregulin receptor ERBB4. Interacts with PTPRN when phosphorylated, protecting PTPRN from protein cleavage by CAPN1. Dephosphorylation upon insulin stimulation disrupts the interaction with PTPRN and results in the cleavage of PTPRN. Interacts with the sodium channel proteins SCN4A and SCN5A. Interacts with SAST, MAST205, microtubules and microtubule-associated proteins. Interacts with the dystrophin related protein UTRN. Interacts with DTNB. Post-translationally, phosphorylated. Partially dephosphorylated upon insulin stimulation. As to expression, ubiquitous. Expressed at high levels in the testis.

It is found in the membrane. Its subcellular location is the cytoplasmic vesicle. It localises to the secretory vesicle membrane. The protein resides in the cell junction. The protein localises to the cytoplasm. It is found in the cytoskeleton. Adapter protein that binds to and probably organizes the subcellular localization of a variety of membrane proteins. May link various receptors to the actin cytoskeleton and the dystrophin glycoprotein complex. May play a role in the regulation of secretory granules via its interaction with PTPRN. This Mus musculus (Mouse) protein is Beta-2-syntrophin (Sntb2).